The sequence spans 380 residues: Cytochrome b (380 aa).

The next 4 helical transmembrane spans lie at 33–53 (FGSLLGLCLIIQILTGLFLAM), 77–98 (WLIRYMHANGASMFFICLFLHV), 113–133 (WNMGIMLLFTVMATAFMGYVL), and 178–198 (FFAFHFILPFIITALVLVHLL). Heme b is bound by residues His83 and His97. Residues His182 and His196 each contribute to the heme b site. An a ubiquinone-binding site is contributed by His201. The next 4 membrane-spanning stretches (helical) occupy residues 226-246 (IKDFLGILILLMASMILTLFF), 288-308 (LGGVLALILSILILAFMPLLH), 320-340 (ITQIMYWTLVADLLILTWIGG), and 347-367 (FITIGQTASIAYFAIILIFMP).

Belongs to the cytochrome b family. The cytochrome bc1 complex contains 11 subunits: 3 respiratory subunits (MT-CYB, CYC1 and UQCRFS1), 2 core proteins (UQCRC1 and UQCRC2) and 6 low-molecular weight proteins (UQCRH/QCR6, UQCRB/QCR7, UQCRQ/QCR8, UQCR10/QCR9, UQCR11/QCR10 and a cleavage product of UQCRFS1). This cytochrome bc1 complex then forms a dimer. The cofactor is heme b.

Its subcellular location is the mitochondrion inner membrane. In terms of biological role, component of the ubiquinol-cytochrome c reductase complex (complex III or cytochrome b-c1 complex) that is part of the mitochondrial respiratory chain. The b-c1 complex mediates electron transfer from ubiquinol to cytochrome c. Contributes to the generation of a proton gradient across the mitochondrial membrane that is then used for ATP synthesis. This chain is Cytochrome b (MT-CYB), found in Microtus oregoni (Creeping vole).